We begin with the raw amino-acid sequence, 530 residues long: Probable basic-leucine zipper transcription factor L (530 aa).

2 stretches are compositionally biased toward low complexity: residues 1–17 (MYSPSSPQSSEPMSPES) and 24–39 (SINNSNSSNNSSANQS). The segment at 1–76 (MYSPSSPQSS…QSAALSRSRK (76 aa)) is disordered. A bZIP domain is found at 55–118 (VKKRQVRLLK…FETKSRLEFL (64 aa)). The tract at residues 56 to 77 (KKRQVRLLKNRQSAALSRSRKK) is basic motif. Residues 83–104 (LESKAQELTHSTQELHVQYNKI) form a leucine-zipper region. 3 disordered regions span residues 142 to 177 (NNIKSHSRSNSSSSSLSSSPTTPNTTTTTTTSTTPV), 216 to 258 (SQNK…SPTP), and 389 to 481 (HHHH…SQIN). 2 stretches are compositionally biased toward low complexity: residues 149–176 (RSNSSSSSLSSSPTTPNTTTTTTTSTTP) and 220–247 (NNNNNNNNNNNNNNNNNNNNNNNNNTTN). Positions 248–257 (LLDQQQQSPT) are enriched in polar residues. A compositionally biased stretch (low complexity) spans 436–478 (SSSPSSSSTSSPSTSSPSTPKSMGFPSPIFIGSSGSGPSSSGS).

It belongs to the bZIP family.

It is found in the nucleus. Its function is as follows. Probable transcriptional regulator. The sequence is that of Probable basic-leucine zipper transcription factor L (bzpL) from Dictyostelium discoideum (Social amoeba).